A 327-amino-acid chain; its full sequence is Golgi to ER traffic protein 4 homolog (327 aa).

A2 carries the post-translational modification N-acetylalanine. S12 is modified (phosphoserine). Residues 195-271 (FVAQAVLQFL…YQPSLRRDPM (77 aa)) form an interacts with BAG6 region. The interval 307–327 (GSSEQEDGEESPSDGSPIELD) is disordered.

This sequence belongs to the GET4 family. In terms of assembly, component of the BAG6/BAT3 complex, at least composed of BAG6, UBL4A and GET4/TRC35. Interacts with BAG6; the interaction is direct and localizes BAG6 to the cytosol. Interacts with GET3. Post-translationally, ubiquitinated by RNF12, leading to proteasomal degradation. When unassembled from BAG6; ubiquitinylation is modulated by BAG6 quality control role and effectuated by RNF126.

It is found in the cytoplasm. Its subcellular location is the cytosol. In terms of biological role, as part of a cytosolic protein quality control complex, the BAG6/BAT3 complex, maintains misfolded and hydrophobic patches-containing proteins in a soluble state and participates in their proper delivery to the endoplasmic reticulum or alternatively can promote their sorting to the proteasome where they undergo degradation. The BAG6/BAT3 complex is involved in the post-translational delivery of tail-anchored/type II transmembrane proteins to the endoplasmic reticulum membrane. Recruited to ribosomes, it interacts with the transmembrane region of newly synthesized tail-anchored proteins and together with SGTA and ASNA1 mediates their delivery to the endoplasmic reticulum. Client proteins that cannot be properly delivered to the endoplasmic reticulum are ubiquitinated and sorted to the proteasome. Similarly, the BAG6/BAT3 complex also functions as a sorting platform for proteins of the secretory pathway that are mislocalized to the cytosol either delivering them to the proteasome for degradation or to the endoplasmic reticulum. The BAG6/BAT3 complex also plays a role in the endoplasmic reticulum-associated degradation (ERAD), a quality control mechanism that eliminates unwanted proteins of the endoplasmic reticulum through their retrotranslocation to the cytosol and their targeting to the proteasome. It maintains these retrotranslocated proteins in an unfolded yet soluble state condition in the cytosol to ensure their proper delivery to the proteasome. This is Golgi to ER traffic protein 4 homolog from Homo sapiens (Human).